We begin with the raw amino-acid sequence, 340 residues long: L-galactonate-5-dehydrogenase (340 aa).

Zn(2+)-binding residues include Cys40, Cys65, Cys92, Cys95, Cys98, Cys106, and Glu146.

This sequence belongs to the zinc-containing alcohol dehydrogenase family. Zn(2+) serves as cofactor.

The enzyme catalyses L-galactonate + NAD(+) = keto-D-tagaturonate + NADH + H(+). Inhibited by EDTA. Functionally, catalyzes the oxidation of L-galactonate to D-tagaturonate. Required for growth on L-galactonate as the sole carbon source. In vitro, can also use L-gulonate. In Escherichia coli (strain K12), this protein is L-galactonate-5-dehydrogenase (lgoD).